The chain runs to 293 residues: 4-hydroxy-tetrahydrodipicolinate synthase (293 aa).

T44 contacts pyruvate. Y132 functions as the Proton donor/acceptor in the catalytic mechanism. Residue K162 is the Schiff-base intermediate with substrate of the active site. I204 is a pyruvate binding site.

This sequence belongs to the DapA family. As to quaternary structure, homotetramer; dimer of dimers.

The protein resides in the cytoplasm. It carries out the reaction L-aspartate 4-semialdehyde + pyruvate = (2S,4S)-4-hydroxy-2,3,4,5-tetrahydrodipicolinate + H2O + H(+). Its pathway is amino-acid biosynthesis; L-lysine biosynthesis via DAP pathway; (S)-tetrahydrodipicolinate from L-aspartate: step 3/4. Functionally, catalyzes the condensation of (S)-aspartate-beta-semialdehyde [(S)-ASA] and pyruvate to 4-hydroxy-tetrahydrodipicolinate (HTPA). The protein is 4-hydroxy-tetrahydrodipicolinate synthase of Erythrobacter litoralis (strain HTCC2594).